A 344-amino-acid polypeptide reads, in one-letter code: Melanocyte-stimulating hormone receptor (344 aa).

Topologically, residues 1–37 are extracellular; the sequence is MPMQGAQRKLLGSLNSTPTATSNLGLAANHTGAPCLE. N-linked (GlcNAc...) asparagine glycosylation is present at Asn-29. Residues 38–63 traverse the membrane as a helical segment; the sequence is VPIPDGLFLSLGLVSLVENVLVVAAI. Residues 64 to 72 are Cytoplasmic-facing; that stretch reads AKNRNLHSS. A helical transmembrane segment spans residues 73 to 93; that stretch reads MYCFICCLAVSDLLVSGSNML. Over 94–118 the chain is Extracellular; sequence ETAIILLLEAGALVTRASVVQQLHN. Residues 119 to 140 form a helical membrane-spanning segment; the sequence is TIDVLTCSSMLCSLCFLGAIAV. Topologically, residues 141–163 are cytoplasmic; sequence DRYISIFYALRYHSIMTLPRAQR. The helical transmembrane segment at 164-183 threads the bilayer; sequence AIAAIWVASVLSSTLFITYY. Residues 184–191 are Extracellular-facing; that stretch reads DHAAVLLC. The helical transmembrane segment at 192-211 threads the bilayer; the sequence is LVVFFLAMLVLMAVLYVHML. Residues 212 to 240 lie on the Cytoplasmic side of the membrane; the sequence is ARACQHAQGIIRLHKRQPPAHKGFGLRGA. The chain crosses the membrane as a helical span at residues 241–266; the sequence is ATLTILLGIFFLCWGPFFLHLTLVVF. Residues 267–279 are Extracellular-facing; the sequence is CPQHMTCSCIFKN. A helical membrane pass occupies residues 280–300; it reads FKVFLTLIICNTIIDPLIYAF. Topologically, residues 301-344 are cytoplasmic; the sequence is RSQELRRTLKEVLLCSRWPGCWAEGGGDSVWPGSCVTLRGPLPP. Cys-315 carries the S-palmitoyl cysteine lipid modification.

This sequence belongs to the G-protein coupled receptor 1 family. As to quaternary structure, interacts with MGRN1, but does not undergo MGRN1-mediated ubiquitination; this interaction competes with GNAS-binding and thus inhibits agonist-induced cAMP production. Interacts with OPN3; the interaction results in a decrease in MC1R-mediated cAMP signaling and ultimately a decrease in melanin production in melanocytes.

It is found in the cell membrane. Its function is as follows. Receptor for MSH (alpha, beta and gamma) and ACTH. The activity of this receptor is mediated by G proteins which activate adenylate cyclase. Mediates melanogenesis, the production of eumelanin (black/brown) and phaeomelanin (red/yellow), via regulation of cAMP signaling in melanocytes. The polypeptide is Melanocyte-stimulating hormone receptor (MC1R) (Callimico goeldii (Goeldi's marmoset)).